Consider the following 191-residue polypeptide: Calcium-binding protein L (191 aa).

The N-myristoyl glycine moiety is linked to residue G2. 3 consecutive EF-hand domains span residues 25-59, 60-95, and 96-131; these read EQVS…RFKD, YDDA…ITKS, and PVSD…ALNT. Ca(2+) is bound by residues D73, D75, N77, R79, and E84.

The protein belongs to the recoverin family.

This is Calcium-binding protein L (cbpL) from Dictyostelium discoideum (Social amoeba).